The chain runs to 394 residues: 1-deoxy-D-xylulose 5-phosphate reductoisomerase (394 aa).

Residues Thr-14, Gly-15, Ser-16, Ile-17, Gly-40, and Asn-128 each contribute to the NADPH site. Lys-129 contributes to the 1-deoxy-D-xylulose 5-phosphate binding site. Position 130 (Glu-130) interacts with NADPH. Asp-154 is a Mn(2+) binding site. 4 residues coordinate 1-deoxy-D-xylulose 5-phosphate: Ser-155, Glu-156, Ser-180, and His-203. Glu-156 lines the Mn(2+) pocket. Position 209 (Gly-209) interacts with NADPH. 4 residues coordinate 1-deoxy-D-xylulose 5-phosphate: Ser-216, Asn-221, Lys-222, and Glu-225. Glu-225 is a binding site for Mn(2+).

Belongs to the DXR family. Mg(2+) is required as a cofactor. Requires Mn(2+) as cofactor.

The enzyme catalyses 2-C-methyl-D-erythritol 4-phosphate + NADP(+) = 1-deoxy-D-xylulose 5-phosphate + NADPH + H(+). The protein operates within isoprenoid biosynthesis; isopentenyl diphosphate biosynthesis via DXP pathway; isopentenyl diphosphate from 1-deoxy-D-xylulose 5-phosphate: step 1/6. In terms of biological role, catalyzes the NADPH-dependent rearrangement and reduction of 1-deoxy-D-xylulose-5-phosphate (DXP) to 2-C-methyl-D-erythritol 4-phosphate (MEP). The polypeptide is 1-deoxy-D-xylulose 5-phosphate reductoisomerase (Xylella fastidiosa (strain M23)).